The chain runs to 339 residues: Phenylalanine--tRNA ligase alpha subunit (339 aa).

Residue glutamate 250 participates in Mg(2+) binding.

The protein belongs to the class-II aminoacyl-tRNA synthetase family. Phe-tRNA synthetase alpha subunit type 1 subfamily. Tetramer of two alpha and two beta subunits. Requires Mg(2+) as cofactor.

It localises to the cytoplasm. It carries out the reaction tRNA(Phe) + L-phenylalanine + ATP = L-phenylalanyl-tRNA(Phe) + AMP + diphosphate + H(+). The chain is Phenylalanine--tRNA ligase alpha subunit from Azobacteroides pseudotrichonymphae genomovar. CFP2.